The chain runs to 227 residues: Cytochrome c oxidase subunit 2 (227 aa).

At 1–14 the chain is on the mitochondrial intermembrane side; the sequence is MAYPFQLGLQDATS. A helical transmembrane segment spans residues 15-45; that stretch reads PIMEELTNFHDHTLMIVFLISSLVLYIISLM. The Mitochondrial matrix portion of the chain corresponds to 46–59; it reads LTTKLTHTSTMDAQ. A helical membrane pass occupies residues 60–87; sequence EVETIWTILPAAILILIALPSLRILYMM. At 88-227 the chain is on the mitochondrial intermembrane side; the sequence is DEINNPVLTV…YFENWSTSMI (140 aa). 6 residues coordinate Cu cation: His161, Cys196, Glu198, Cys200, His204, and Met207. Glu198 serves as a coordination point for Mg(2+). Tyr218 carries the phosphotyrosine modification.

The protein belongs to the cytochrome c oxidase subunit 2 family. As to quaternary structure, component of the cytochrome c oxidase (complex IV, CIV), a multisubunit enzyme composed of 14 subunits. The complex is composed of a catalytic core of 3 subunits MT-CO1, MT-CO2 and MT-CO3, encoded in the mitochondrial DNA, and 11 supernumerary subunits COX4I, COX5A, COX5B, COX6A, COX6B, COX6C, COX7A, COX7B, COX7C, COX8 and NDUFA4, which are encoded in the nuclear genome. The complex exists as a monomer or a dimer and forms supercomplexes (SCs) in the inner mitochondrial membrane with NADH-ubiquinone oxidoreductase (complex I, CI) and ubiquinol-cytochrome c oxidoreductase (cytochrome b-c1 complex, complex III, CIII), resulting in different assemblies (supercomplex SCI(1)III(2)IV(1) and megacomplex MCI(2)III(2)IV(2)). Found in a complex with TMEM177, COA6, COX18, COX20, SCO1 and SCO2. Interacts with TMEM177 in a COX20-dependent manner. Interacts with COX20. Interacts with COX16. Cu cation is required as a cofactor.

The protein resides in the mitochondrion inner membrane. The enzyme catalyses 4 Fe(II)-[cytochrome c] + O2 + 8 H(+)(in) = 4 Fe(III)-[cytochrome c] + 2 H2O + 4 H(+)(out). Its function is as follows. Component of the cytochrome c oxidase, the last enzyme in the mitochondrial electron transport chain which drives oxidative phosphorylation. The respiratory chain contains 3 multisubunit complexes succinate dehydrogenase (complex II, CII), ubiquinol-cytochrome c oxidoreductase (cytochrome b-c1 complex, complex III, CIII) and cytochrome c oxidase (complex IV, CIV), that cooperate to transfer electrons derived from NADH and succinate to molecular oxygen, creating an electrochemical gradient over the inner membrane that drives transmembrane transport and the ATP synthase. Cytochrome c oxidase is the component of the respiratory chain that catalyzes the reduction of oxygen to water. Electrons originating from reduced cytochrome c in the intermembrane space (IMS) are transferred via the dinuclear copper A center (CU(A)) of subunit 2 and heme A of subunit 1 to the active site in subunit 1, a binuclear center (BNC) formed by heme A3 and copper B (CU(B)). The BNC reduces molecular oxygen to 2 water molecules using 4 electrons from cytochrome c in the IMS and 4 protons from the mitochondrial matrix. This is Cytochrome c oxidase subunit 2 (MT-CO2) from Arvicanthis somalicus (Neumann's grass rat).